Consider the following 635-residue polypeptide: Probable extracellular metalloproteinase 1 (635 aa).

The signal sequence occupies residues 1 to 19 (MHGLLLAAGLLSLPLHVLA). The propeptide occupies 20-246 (HPQPSTSTSL…VHNVVDYVAH (227 aa)). Asparagine 287 carries N-linked (GlcNAc...) asparagine glycosylation. A Zn(2+)-binding site is contributed by histidine 430. Glutamate 431 is an active-site residue. Histidine 434 contributes to the Zn(2+) binding site. N-linked (GlcNAc...) asparagine glycosylation is found at asparagine 475, asparagine 594, and asparagine 623.

The protein belongs to the peptidase M36 family. Zn(2+) is required as a cofactor.

It is found in the secreted. Functionally, secreted metalloproteinase probably acting as a virulence factor. The polypeptide is Probable extracellular metalloproteinase 1 (MEP1) (Arthroderma benhamiae (strain ATCC MYA-4681 / CBS 112371) (Trichophyton mentagrophytes)).